The following is a 202-amino-acid chain: Small ribosomal subunit protein uS4c (202 aa).

Residues 90–158 (MRSDNVIFRL…ISKNIELYQK (69 aa)) form the S4 RNA-binding domain.

Belongs to the universal ribosomal protein uS4 family. In terms of assembly, part of the 30S ribosomal subunit. Contacts protein S5. The interaction surface between S4 and S5 is involved in control of translational fidelity.

It localises to the plastid. The protein localises to the chloroplast. In terms of biological role, one of the primary rRNA binding proteins, it binds directly to 16S rRNA where it nucleates assembly of the body of the 30S subunit. With S5 and S12 plays an important role in translational accuracy. The sequence is that of Small ribosomal subunit protein uS4c (rps4) from Exsertotheca crispa (Moss).